A 147-amino-acid chain; its full sequence is MVTTLIAVIGTLAGTGLAGLLQHRTARTTRDDSRRDAAVQAVAALAAALADHRRAMWVREDLRLTGASPEAYEAARTESHATRSAITAPLTTVSVLAPALAPAATAAAQAAYDLRAAADRTALTTDRDRAMAAADGLVAAAARRFGA.

The segment at 1–20 (MVTTLIAVIGTLAGTGLAGL) is hydrophobic.

Involved in plasmid transfer. The chain is Protein KilB (kilB) from Streptomyces lividans.